The chain runs to 361 residues: Alanine racemase (361 aa).

K34 (proton acceptor; specific for D-alanine) is an active-site residue. Position 34 is an N6-(pyridoxal phosphate)lysine (K34). Residue R129 participates in substrate binding. Catalysis depends on Y256, which acts as the Proton acceptor; specific for L-alanine. A substrate-binding site is contributed by M304.

This sequence belongs to the alanine racemase family. It depends on pyridoxal 5'-phosphate as a cofactor.

The catalysed reaction is L-alanine = D-alanine. It participates in amino-acid biosynthesis; D-alanine biosynthesis; D-alanine from L-alanine: step 1/1. Functionally, catalyzes the interconversion of L-alanine and D-alanine. May also act on other amino acids. This chain is Alanine racemase (alr), found in Corynebacterium glutamicum (strain R).